We begin with the raw amino-acid sequence, 875 residues long: Kelch-like protein 29 (875 aa).

Polar residues predominate over residues 113-126; that stretch reads IRWGQTPVNQSTPW. Disordered regions lie at residues 113–145 and 240–291; these read IRWG…PGTG and GVGQ…DSAH. Positions 131 to 140 are enriched in basic and acidic residues; the sequence is PPSKQMRESD. Over residues 270–280 the composition is skewed to low complexity; sequence PSAALPSSVPA. The region spanning 329-401 is the BTB domain; that stretch reads TDLKIVVEGR…VYTGSLVIDS (73 aa). Kelch repeat units lie at residues 585–635, 637–683, 684–730, 732–778, 779–821, and 822–870; these read VIVL…VSAG, NIYL…VYDG, KIYT…VCGG, IYVF…TLNG, FVFI…VLDG, and KIYA…VIKK.

The polypeptide is Kelch-like protein 29 (Klhl29) (Mus musculus (Mouse)).